The chain runs to 320 residues: Ribose-phosphate pyrophosphokinase 3 (320 aa).

Mg(2+) is bound by residues Asp-131, His-133, Asp-142, and Asp-146.

This sequence belongs to the ribose-phosphate pyrophosphokinase family.

It localises to the cytoplasm. It carries out the reaction D-ribose 5-phosphate + ATP = 5-phospho-alpha-D-ribose 1-diphosphate + AMP + H(+). The protein operates within metabolic intermediate biosynthesis; 5-phospho-alpha-D-ribose 1-diphosphate biosynthesis; 5-phospho-alpha-D-ribose 1-diphosphate from D-ribose 5-phosphate (route I): step 1/1. Its function is as follows. 5-phosphoribose 1-diphosphate synthase involved in nucleotide, histidine, and tryptophan biosynthesis. Active in heteromultimeric complexes with other 5-phosphoribose 1-diphosphate synthases (PRS2, PRS3, PRS4 and PRS5). The sequence is that of Ribose-phosphate pyrophosphokinase 3 (PRS3) from Saccharomyces cerevisiae (strain ATCC 204508 / S288c) (Baker's yeast).